The chain runs to 429 residues: UDP-N-acetylglucosamine 1-carboxyvinyltransferase (429 aa).

22–23 (KN) is a binding site for phosphoenolpyruvate. Arginine 102 is a UDP-N-acetyl-alpha-D-glucosamine binding site. The active-site Proton donor is cysteine 126. The residue at position 126 (cysteine 126) is a 2-(S-cysteinyl)pyruvic acid O-phosphothioketal. Residues 131-135 (RPVDL), aspartate 316, and isoleucine 338 contribute to the UDP-N-acetyl-alpha-D-glucosamine site.

It belongs to the EPSP synthase family. MurA subfamily.

The protein localises to the cytoplasm. The enzyme catalyses phosphoenolpyruvate + UDP-N-acetyl-alpha-D-glucosamine = UDP-N-acetyl-3-O-(1-carboxyvinyl)-alpha-D-glucosamine + phosphate. It functions in the pathway cell wall biogenesis; peptidoglycan biosynthesis. Functionally, cell wall formation. Adds enolpyruvyl to UDP-N-acetylglucosamine. The chain is UDP-N-acetylglucosamine 1-carboxyvinyltransferase from Methylorubrum extorquens (strain CM4 / NCIMB 13688) (Methylobacterium extorquens).